Here is a 117-residue protein sequence, read N- to C-terminus: Large ribosomal subunit protein uL22 (117 aa).

The protein belongs to the universal ribosomal protein uL22 family. As to quaternary structure, part of the 50S ribosomal subunit.

This protein binds specifically to 23S rRNA; its binding is stimulated by other ribosomal proteins, e.g. L4, L17, and L20. It is important during the early stages of 50S assembly. It makes multiple contacts with different domains of the 23S rRNA in the assembled 50S subunit and ribosome. In terms of biological role, the globular domain of the protein is located near the polypeptide exit tunnel on the outside of the subunit, while an extended beta-hairpin is found that lines the wall of the exit tunnel in the center of the 70S ribosome. This is Large ribosomal subunit protein uL22 from Chlorobium phaeobacteroides (strain BS1).